Here is a 177-residue protein sequence, read N- to C-terminus: Large ribosomal subunit protein bL9 (177 aa).

Belongs to the bacterial ribosomal protein bL9 family.

Its function is as follows. Binds to the 23S rRNA. The sequence is that of Large ribosomal subunit protein bL9 from Rhodopirellula baltica (strain DSM 10527 / NCIMB 13988 / SH1).